Here is a 433-residue protein sequence, read N- to C-terminus: Serine/threonine-protein kinase KDX1 (433 aa).

The 296-residue stretch at 23 to 318 (FHLTGKIGRG…VEDALEHPYL (296 aa)) folds into the Protein kinase domain. Residues 29-37 (IGRGSHSLI) and lysine 55 each bind ATP. Aspartate 153 functions as the Proton acceptor in the catalytic mechanism.

The protein belongs to the protein kinase superfamily. Ser/Thr protein kinase family. Interacts with RLM1.

The catalysed reaction is L-seryl-[protein] + ATP = O-phospho-L-seryl-[protein] + ADP + H(+). It catalyses the reaction L-threonyl-[protein] + ATP = O-phospho-L-threonyl-[protein] + ADP + H(+). Its function is as follows. Serine/threonine-protein kinase involved in the SLT2 mitogen-activated (MAP) kinase signaling pathway that regulates cell wall integrity. May also be involved in the mating pheromone and the CWI MAPK pathways. This Saccharomyces cerevisiae (strain ATCC 204508 / S288c) (Baker's yeast) protein is Serine/threonine-protein kinase KDX1 (KDX1).